The sequence spans 312 residues: MTHAKLVIIGSGPAGYTAAIYASRALLTPVLFEGFFSGIAGGQLMTTTEVENFPGFPEGVLGHQLMDLMKTQAQRFGTQVLSKDITAVDFSVRPFVLKSGKETFTCDACIIATGASAKRLSIPGAGDNEFWQKGVTACAVCDGASPIFRDKDLFVVGGGDSALEEAMFLTRYGKRVFVVHRRDTLRASKVMVNKAQANEKIFFLWNSEIVKISGDTLVRSIDIYNNVDETTTTMEAAGVFFAIGHQPNTAFLGGQVALDENGYIITEKGSSRTSVPGVFAAGDVQDKYYRQAITSAGSGCMAALDAERFLEN.

33-43 (EGFFSGIAGGQ) provides a ligand contact to FAD. Cysteines 138 and 141 form a disulfide. 283 to 292 (DVQDKYYRQA) contributes to the FAD binding site.

It belongs to the class-II pyridine nucleotide-disulfide oxidoreductase family. Homodimer. It depends on FAD as a cofactor.

The protein localises to the cytoplasm. The catalysed reaction is [thioredoxin]-dithiol + NADP(+) = [thioredoxin]-disulfide + NADPH + H(+). The sequence is that of Thioredoxin reductase (trxB) from Chlamydia trachomatis serovar D (strain ATCC VR-885 / DSM 19411 / UW-3/Cx).